The chain runs to 323 residues: Protein SopB (323 aa).

Residues 1-20 (MKRAPVIPKHTLNTQPVEDT) are disordered. The span at 11–20 (TLNTQPVEDT) shows a compositional bias: polar residues. A DNA-binding region (H-T-H motif) is located at residues 180 to 199 (SALADAENISRKIITRCINT).

The protein belongs to the ParB family.

Functionally, control of plasmid partitioning; required to recognize the cis-acting. Binds specifically with the DNA segment containing the sopC region. SopB is trans-acting. The sequence is that of Protein SopB (sopB) from Escherichia coli O157:H7.